Reading from the N-terminus, the 398-residue chain is Probable RNA methyltransferase sce1580 (398 aa).

The tract at residues 1–24 is disordered; sequence MRVPEIPEETASPLRAGDPPAQVA. Catalysis depends on Glu-140, which acts as the Proton acceptor. Residues 146 to 378 form the Radical SAM core domain; sequence GPARTTLCVS…TLVRRPRGRD (233 aa). Cys-153 and Cys-383 form a disulfide bridge. The [4Fe-4S] cluster site is built by Cys-160, Cys-164, and Cys-167. S-adenosyl-L-methionine contacts are provided by residues 211–212, Ser-243, 265–267, and Asn-340; these read GE and SLN. Cys-383 functions as the S-methylcysteine intermediate in the catalytic mechanism.

The protein belongs to the radical SAM superfamily. RlmN family. [4Fe-4S] cluster is required as a cofactor.

It localises to the cytoplasm. The protein is Probable RNA methyltransferase sce1580 of Sorangium cellulosum (strain So ce56) (Polyangium cellulosum (strain So ce56)).